The following is a 192-amino-acid chain: Imidazole glycerol phosphate synthase subunit HisH (192 aa).

The Glutamine amidotransferase type-1 domain occupies 1–192 (MIVIVDYGLG…QAIQGGFIND (192 aa)). The active-site Nucleophile is the C77. Active-site residues include H169 and E171.

As to quaternary structure, heterodimer of HisH and HisF.

It localises to the cytoplasm. It carries out the reaction 5-[(5-phospho-1-deoxy-D-ribulos-1-ylimino)methylamino]-1-(5-phospho-beta-D-ribosyl)imidazole-4-carboxamide + L-glutamine = D-erythro-1-(imidazol-4-yl)glycerol 3-phosphate + 5-amino-1-(5-phospho-beta-D-ribosyl)imidazole-4-carboxamide + L-glutamate + H(+). The catalysed reaction is L-glutamine + H2O = L-glutamate + NH4(+). The protein operates within amino-acid biosynthesis; L-histidine biosynthesis; L-histidine from 5-phospho-alpha-D-ribose 1-diphosphate: step 5/9. In terms of biological role, IGPS catalyzes the conversion of PRFAR and glutamine to IGP, AICAR and glutamate. The HisH subunit catalyzes the hydrolysis of glutamine to glutamate and ammonia as part of the synthesis of IGP and AICAR. The resulting ammonia molecule is channeled to the active site of HisF. This Staphylococcus aureus (strain bovine RF122 / ET3-1) protein is Imidazole glycerol phosphate synthase subunit HisH.